The sequence spans 62 residues: Cytotoxin 7 (62 aa).

The signal sequence occupies residues 1–2 (YT). Disulfide bonds link C5-C23, C16-C40, C44-C55, and C56-C61.

This sequence belongs to the three-finger toxin family. Short-chain subfamily. Type IA cytotoxin sub-subfamily. In terms of assembly, monomer in solution; Homodimer and oligomer in the presence of negatively charged lipids forming a pore with a size ranging between 20 and 30 Angstroms. In terms of tissue distribution, expressed by the venom gland.

It localises to the secreted. The protein resides in the target cell membrane. Its function is as follows. Shows cytolytic activity on many different cells by forming pore in lipid membranes. In vivo, increases heart rate or kills the animal by cardiac arrest. In addition, it binds to heparin with high affinity, interacts with Kv channel-interacting protein 1 (KCNIP1) in a calcium-independent manner, and binds to integrin alpha-V/beta-3 (ITGAV/ITGB3) with moderate affinity. This Naja sputatrix (Malayan spitting cobra) protein is Cytotoxin 7.